Consider the following 380-residue polypeptide: Chaperone protein DnaJ (380 aa).

Positions 5–70 constitute a J domain; that stretch reads DYYEVLGLQK…EKRAAYDQYG (66 aa). Residues 136-214 form a CR-type zinc finger; it reads GCKKDIRIST…CHGDGRVQKA (79 aa). Zn(2+) is bound by residues cysteine 149, cysteine 152, cysteine 166, cysteine 169, cysteine 188, cysteine 191, cysteine 202, and cysteine 205. 4 CXXCXGXG motif repeats span residues 149 to 156, 166 to 173, 188 to 195, and 202 to 209; these read CDTCHGSG, CSHCHGSG, CPSCHGSG, and CKSCHGDG.

This sequence belongs to the DnaJ family. In terms of assembly, homodimer. It depends on Zn(2+) as a cofactor.

The protein localises to the cytoplasm. Functionally, participates actively in the response to hyperosmotic and heat shock by preventing the aggregation of stress-denatured proteins and by disaggregating proteins, also in an autonomous, DnaK-independent fashion. Unfolded proteins bind initially to DnaJ; upon interaction with the DnaJ-bound protein, DnaK hydrolyzes its bound ATP, resulting in the formation of a stable complex. GrpE releases ADP from DnaK; ATP binding to DnaK triggers the release of the substrate protein, thus completing the reaction cycle. Several rounds of ATP-dependent interactions between DnaJ, DnaK and GrpE are required for fully efficient folding. Also involved, together with DnaK and GrpE, in the DNA replication of plasmids through activation of initiation proteins. The chain is Chaperone protein DnaJ from Actinobacillus pleuropneumoniae serotype 5b (strain L20).